The primary structure comprises 148 residues: Nickel and cobalt resistance protein CnrR (148 aa).

An N-terminal signal peptide occupies residues 1–26 (MMKSRTRRLSLSTLFGALLGVSVAAA). The Periplasmic portion of the chain corresponds to 28–148 (LYYSHRNEAG…LIDALRRGSQ (121 aa)). Residues 54-117 (NEREILELKE…AAGDLQRATL (64 aa)) adopt a coiled-coil conformation.

The protein to A.xylosoxydans NccX.

Its subcellular location is the periplasm. CnrH alone is able to activate cnr expression, while both CnrY and CrnR (CnrX) are needed for nickel induction of CnrH. Has been suggested to bind nickel. In Cupriavidus metallidurans (strain ATCC 43123 / DSM 2839 / NBRC 102507 / CH34) (Ralstonia metallidurans), this protein is Nickel and cobalt resistance protein CnrR (cnrR).